The following is a 215-amino-acid chain: KID-containing protein 1 (215 aa).

Disordered stretches follow at residues 1-132 (MAGG…NKKR) and 150-183 (NPKS…GDVL). The span at 64–81 (DSEEEDEESEEDNDEEEL) shows a compositional bias: acidic residues. Positions 129 to 137 (NKKRRLQIY) match the Nuclear localization signal motif. Positions 162–175 (DNDDEEGDDGDLSD) are enriched in acidic residues. The tract at residues 177–204 (ERGGDVLARRPSFKNRALKSMSCFALSD) is kinase-inducible domain (KID). Ser-188 is modified (phosphoserine; by PKA).

As to quaternary structure, interacts with HDA19; Ser-188 is critical for this interaction. In terms of tissue distribution, strongly expressed in stems, flowers, roots and immature siliques, but not detected in leaf blades of seedlings.

The protein resides in the nucleus. In terms of biological role, transcription activator which may regulates gene expression through interaction with the histone deacetylase HDA19. The chain is KID-containing protein 1 from Brassica napus (Rape).